Reading from the N-terminus, the 31-residue chain is U2-theraphotoxin-Hhn1a (31 aa).

Disulfide bonds link C2–C14, C7–C19, and C13–C26.

Expressed by the venom gland.

It is found in the secreted. In terms of biological role, agglutinates erythrocytes. The polypeptide is U2-theraphotoxin-Hhn1a (Cyriopagopus hainanus (Chinese bird spider)).